A 388-amino-acid chain; its full sequence is Succinate--CoA ligase [ADP-forming] subunit beta (388 aa).

Residues 9–244 (KQLFQKYGVP…LDEEDPFEIE (236 aa)) form the ATP-grasp domain. ATP-binding positions include lysine 46, 53–55 (GRG), glutamate 99, leucine 102, and glutamate 107. Residues asparagine 199 and aspartate 213 each coordinate Mg(2+). Substrate contacts are provided by residues asparagine 265 and 322–324 (GIL).

This sequence belongs to the succinate/malate CoA ligase beta subunit family. As to quaternary structure, heterotetramer of two alpha and two beta subunits. It depends on Mg(2+) as a cofactor.

It carries out the reaction succinate + ATP + CoA = succinyl-CoA + ADP + phosphate. The enzyme catalyses GTP + succinate + CoA = succinyl-CoA + GDP + phosphate. The protein operates within carbohydrate metabolism; tricarboxylic acid cycle; succinate from succinyl-CoA (ligase route): step 1/1. Functionally, succinyl-CoA synthetase functions in the citric acid cycle (TCA), coupling the hydrolysis of succinyl-CoA to the synthesis of either ATP or GTP and thus represents the only step of substrate-level phosphorylation in the TCA. The beta subunit provides nucleotide specificity of the enzyme and binds the substrate succinate, while the binding sites for coenzyme A and phosphate are found in the alpha subunit. This Syntrophobacter fumaroxidans (strain DSM 10017 / MPOB) protein is Succinate--CoA ligase [ADP-forming] subunit beta.